A 680-amino-acid polypeptide reads, in one-letter code: Putative cyclin-dependent serine/threonine-protein kinase DDB_G0272797/DDB_G0274007 (680 aa).

The region spanning tyrosine 4–phenylalanine 381 is the Protein kinase domain. ATP is bound by residues cysteine 10–valine 18 and lysine 33. Aspartate 125 (proton acceptor) is an active-site residue. Disordered regions lie at residues glutamine 243–proline 299, arginine 409–histidine 444, leucine 483–glutamine 507, and glutamine 597–glycine 680. Over residues asparagine 257–asparagine 286 the composition is skewed to low complexity. Residues lysine 287–glutamine 297 show a composition bias toward polar residues. Composition is skewed to low complexity over residues glutamine 410 to histidine 444, leucine 483 to histidine 494, and glutamine 597 to histidine 616. Residues glutamine 617 to glutamine 631 show a composition bias toward basic residues. The span at histidine 632–proline 642 shows a compositional bias: low complexity. A compositionally biased stretch (pro residues) spans glutamine 643–threonine 655. The segment covering serine 656–glycine 680 has biased composition (low complexity).

Belongs to the protein kinase superfamily. CMGC Ser/Thr protein kinase family. CDC2/CDKX subfamily.

The enzyme catalyses L-seryl-[protein] + ATP = O-phospho-L-seryl-[protein] + ADP + H(+). It carries out the reaction L-threonyl-[protein] + ATP = O-phospho-L-threonyl-[protein] + ADP + H(+). The sequence is that of Putative cyclin-dependent serine/threonine-protein kinase DDB_G0272797/DDB_G0274007 from Dictyostelium discoideum (Social amoeba).